The primary structure comprises 433 residues: DNA methyltransferase 1-associated protein 1 (433 aa).

The segment at M1–K204 is required for nuclear localization. Residues N148–V197 enclose the Myb-like domain. A coiled-coil region spans residues V186–N281. Residues E252–D264 show a composition bias toward basic and acidic residues. Residues E252–R305 are disordered. Over residues L268–T285 the composition is skewed to polar residues. Basic residues predominate over residues Y288–Q299.

As to quaternary structure, interacts with Rel. Interacts with akirin and Bap55.

The protein localises to the nucleus. It is found in the cytoplasm. Its function is as follows. Involved in transcription repression and activation. Required for larvae and pupal development, and for normal innate immune responses. Involved in modulating the activation of the immune deficiency pathway (Imd), acting either downstream of, or at the level of, the NF-kappa-B factor Rel. Possibly functions with akirin to regulate Rel, and its interaction with the Brahma complex protein Bap55 suggests that it may regulate the IMD pathway at the level of chromatin remodeling. In Drosophila melanogaster (Fruit fly), this protein is DNA methyltransferase 1-associated protein 1.